Here is a 492-residue protein sequence, read N- to C-terminus: Phosphatidylinositol 4-kinase type 2-beta (492 aa).

Over residues 1-11 (MEPKQTADARD) the composition is skewed to basic and acidic residues. Residues 1–98 (MEPKQTADAR…SDRENMSGGH (98 aa)) form a disordered region. In terms of domain architecture, PI3K/PI4K catalytic spans 127 to 462 (GVFPERISQG…VQMPRVVVER (336 aa)). Residues 133–139 (ISQGSSG) form a G-loop region. Residues Ser140 and Lys155 each coordinate ATP. The important for substrate binding stretch occupies residues 160–162 (EPY). The tract at residues 168 to 181 (KWTKYFHKICCPCC) is important for interaction with membranes. Residues 264-267 (QLFV) and 278-279 (RK) each bind ATP. The segment at 271–279 (KEADYWLRK) is important for interaction with membranes. The segment at 308 to 316 (RNTDRGNDN) is catalytic loop. Positions 353–373 (AIDNGLAFPFKHPDEWRAYPF) are activation loop. Residue Asp355 participates in ATP binding. The interval 368-377 (WRAYPFHWAW) is important for interaction with membranes.

The protein belongs to the PI3/PI4-kinase family. Type II PI4K subfamily.

The protein localises to the cytoplasm. It is found in the cytosol. Its subcellular location is the golgi apparatus membrane. The protein resides in the endoplasmic reticulum membrane. It localises to the cell membrane. The protein localises to the early endosome membrane. The catalysed reaction is a 1,2-diacyl-sn-glycero-3-phospho-(1D-myo-inositol) + ATP = a 1,2-diacyl-sn-glycero-3-phospho-(1D-myo-inositol 4-phosphate) + ADP + H(+). Functionally, contributes to the overall PI4-kinase activity of the cell. This contribution may be especially significant in plasma membrane, endosomal and Golgi compartments. The phosphorylation of phosphatidylinositol (PI) to PI4P is the first committed step in the generation of phosphatidylinositol 4,5-bisphosphate (PIP2), a precursor of the second messenger inositol 1,4,5-trisphosphate (InsP3). This is Phosphatidylinositol 4-kinase type 2-beta (pi4k2b) from Xenopus tropicalis (Western clawed frog).